The sequence spans 286 residues: Cytochrome c oxidase subunit 3 (286 aa).

A run of 8 helical transmembrane segments spans residues 13–33, 40–60, 85–105, 133–153, 173–195, 199–221, 223–243, and 253–273; these read GVFL…GVVI, VGTF…CFLI, IIQY…VVFF, IILD…NIIL, LCRE…LLFI, VWEF…LFSI, TLHF…IFNI, and IVLI…WFFL.

The protein belongs to the cytochrome c oxidase subunit 3 family. Component of the cytochrome c oxidase (complex IV, CIV), a multisubunit enzyme composed of a catalytic core of 3 subunits and several supernumerary subunits. The complex exists as a monomer or a dimer and forms supercomplexes (SCs) in the inner mitochondrial membrane with ubiquinol-cytochrome c oxidoreductase (cytochrome b-c1 complex, complex III, CIII).

The protein localises to the mitochondrion inner membrane. The enzyme catalyses 4 Fe(II)-[cytochrome c] + O2 + 8 H(+)(in) = 4 Fe(III)-[cytochrome c] + 2 H2O + 4 H(+)(out). Functionally, component of the cytochrome c oxidase, the last enzyme in the mitochondrial electron transport chain which drives oxidative phosphorylation. The respiratory chain contains 3 multisubunit complexes succinate dehydrogenase (complex II, CII), ubiquinol-cytochrome c oxidoreductase (cytochrome b-c1 complex, complex III, CIII) and cytochrome c oxidase (complex IV, CIV), that cooperate to transfer electrons derived from NADH and succinate to molecular oxygen, creating an electrochemical gradient over the inner membrane that drives transmembrane transport and the ATP synthase. Cytochrome c oxidase is the component of the respiratory chain that catalyzes the reduction of oxygen to water. Electrons originating from reduced cytochrome c in the intermembrane space (IMS) are transferred via the dinuclear copper A center (CU(A)) of subunit 2 and heme A of subunit 1 to the active site in subunit 1, a binuclear center (BNC) formed by heme A3 and copper B (CU(B)). The BNC reduces molecular oxygen to 2 water molecules using 4 electrons from cytochrome c in the IMS and 4 protons from the mitochondrial matrix. This chain is Cytochrome c oxidase subunit 3 (COIII), found in Trypanoplasma borreli.